The primary structure comprises 531 residues: CTP synthase (531 aa).

An amidoligase domain region spans residues 1–265; that stretch reads MAKYIFITGG…DRIITERLNL (265 aa). Serine 13 provides a ligand contact to CTP. Position 13 (serine 13) interacts with UTP. 14 to 19 serves as a coordination point for ATP; sequence SLGKGI. Tyrosine 54 contributes to the L-glutamine binding site. Residue aspartate 71 coordinates ATP. Mg(2+) is bound by residues aspartate 71 and glutamate 139. Residues 146 to 148, 186 to 191, and lysine 222 each bind CTP; these read DIE and KTKPTQ. UTP contacts are provided by residues 186 to 191 and lysine 222; that span reads KTKPTQ. In terms of domain architecture, Glutamine amidotransferase type-1 spans 290 to 529; the sequence is NVALVGKYVE…IRACLEYKRK (240 aa). L-glutamine is bound at residue glycine 349. Cysteine 376 functions as the Nucleophile; for glutamine hydrolysis in the catalytic mechanism. Residues 377–380, glutamate 400, and arginine 457 contribute to the L-glutamine site; that span reads LGMQ. Active-site residues include histidine 502 and glutamate 504.

Belongs to the CTP synthase family. As to quaternary structure, homotetramer.

The enzyme catalyses UTP + L-glutamine + ATP + H2O = CTP + L-glutamate + ADP + phosphate + 2 H(+). The catalysed reaction is L-glutamine + H2O = L-glutamate + NH4(+). It catalyses the reaction UTP + NH4(+) + ATP = CTP + ADP + phosphate + 2 H(+). It participates in pyrimidine metabolism; CTP biosynthesis via de novo pathway; CTP from UDP: step 2/2. Allosterically activated by GTP, when glutamine is the substrate; GTP has no effect on the reaction when ammonia is the substrate. The allosteric effector GTP functions by stabilizing the protein conformation that binds the tetrahedral intermediate(s) formed during glutamine hydrolysis. Inhibited by the product CTP, via allosteric rather than competitive inhibition. Catalyzes the ATP-dependent amination of UTP to CTP with either L-glutamine or ammonia as the source of nitrogen. Regulates intracellular CTP levels through interactions with the four ribonucleotide triphosphates. This Aquifex aeolicus (strain VF5) protein is CTP synthase.